We begin with the raw amino-acid sequence, 213 residues long: Pyrrolidone-carboxylate peptidase (213 aa).

Residues glutamate 81, cysteine 144, and histidine 166 contribute to the active site.

Belongs to the peptidase C15 family. As to quaternary structure, homodimer.

The protein localises to the cytoplasm. The catalysed reaction is Release of an N-terminal pyroglutamyl group from a polypeptide, the second amino acid generally not being Pro.. Removes 5-oxoproline from various penultimate amino acid residues except L-proline. This is Pyrrolidone-carboxylate peptidase (pcp) from Pseudomonas fluorescens.